Here is a 195-residue protein sequence, read N- to C-terminus: HTH-type transcriptional regulator BetI (195 aa).

Residues 8 to 68 (SIRRRQLIDA…ATMRDITSQL (61 aa)) form the HTH tetR-type domain. A DNA-binding region (H-T-H motif) is located at residues 31–50 (TIAQIARRAGVSTGIISHYF).

It functions in the pathway amine and polyamine biosynthesis; betaine biosynthesis via choline pathway [regulation]. Repressor involved in the biosynthesis of the osmoprotectant glycine betaine. It represses transcription of the choline transporter BetT and the genes of BetAB involved in the synthesis of glycine betaine. The sequence is that of HTH-type transcriptional regulator BetI from Escherichia coli O17:K52:H18 (strain UMN026 / ExPEC).